Consider the following 122-residue polypeptide: UPF0102 protein cgR_1859 (122 aa).

This sequence belongs to the UPF0102 family.

The protein is UPF0102 protein cgR_1859 of Corynebacterium glutamicum (strain R).